The primary structure comprises 349 residues: Hydrophobic dipeptide epimerase (349 aa).

Residues Thr127 and 153–155 contribute to the substrate site; that span reads KIK. Residues Asp186, Glu212, and Asp237 each contribute to the Mg(2+) site. Substrate contacts are provided by residues Lys259 and 309 to 311; that span reads DLD.

It belongs to the mandelate racemase/muconate lactonizing enzyme family. Mg(2+) is required as a cofactor.

Functionally, catalyzes the epimerization a variety of hydrophobic dipeptides. Epimerase activity is highest with L-Ala-L-Tyr, and lower with L-Ala-L-Met, L-Ala-L-Phe, L-Tyr-L-Ala, L-Tyr-L-Met and L-Tyr-L-Trp (in vitro). The polypeptide is Hydrophobic dipeptide epimerase (Flavobacteria bacterium (strain MS024-2A)).